The following is a 358-amino-acid chain: Dual-specificity RNA methyltransferase RlmN (358 aa).

Catalysis depends on glutamate 91, which acts as the Proton acceptor. Residues 98–335 enclose the Radical SAM core domain; sequence SQGRITQCLS…AIIRKSKGAD (238 aa). A disulfide bridge connects residues cysteine 105 and cysteine 340. The [4Fe-4S] cluster site is built by cysteine 112, cysteine 116, and cysteine 119. Residues 164-165, serine 196, 219-221, and asparagine 295 contribute to the S-adenosyl-L-methionine site; these read GE and SLH. The active-site S-methylcysteine intermediate is the cysteine 340.

The protein belongs to the radical SAM superfamily. RlmN family. [4Fe-4S] cluster is required as a cofactor.

It localises to the cytoplasm. It carries out the reaction adenosine(2503) in 23S rRNA + 2 reduced [2Fe-2S]-[ferredoxin] + 2 S-adenosyl-L-methionine = 2-methyladenosine(2503) in 23S rRNA + 5'-deoxyadenosine + L-methionine + 2 oxidized [2Fe-2S]-[ferredoxin] + S-adenosyl-L-homocysteine. The catalysed reaction is adenosine(37) in tRNA + 2 reduced [2Fe-2S]-[ferredoxin] + 2 S-adenosyl-L-methionine = 2-methyladenosine(37) in tRNA + 5'-deoxyadenosine + L-methionine + 2 oxidized [2Fe-2S]-[ferredoxin] + S-adenosyl-L-homocysteine. Functionally, specifically methylates position 2 of adenine 2503 in 23S rRNA and position 2 of adenine 37 in tRNAs. m2A2503 modification seems to play a crucial role in the proofreading step occurring at the peptidyl transferase center and thus would serve to optimize ribosomal fidelity. The polypeptide is Dual-specificity RNA methyltransferase RlmN (Oleidesulfovibrio alaskensis (strain ATCC BAA-1058 / DSM 17464 / G20) (Desulfovibrio alaskensis)).